The chain runs to 390 residues: Formamidopyrimidine-DNA glycosylase (390 aa).

Catalysis depends on proline 2, which acts as the Schiff-base intermediate with DNA. Glutamate 3 acts as the Proton donor in catalysis. The active-site Proton donor; for beta-elimination activity is the lysine 60. DNA is bound by residues tyrosine 107, arginine 126, lysine 167, and asparagine 186. Positions alanine 283–serine 390 are disordered. Residues aspartate 301–aspartate 316 are compositionally biased toward acidic residues. Residues serine 321–serine 337 are compositionally biased toward basic residues. A compositionally biased stretch (acidic residues) spans glutamate 343–glutamate 355. The segment covering proline 360–lysine 370 has biased composition (basic residues).

Belongs to the FPG family. As to quaternary structure, monomer. Expressed in leaves (at protein levels).

It is found in the nucleus. The catalysed reaction is Hydrolysis of DNA containing ring-opened 7-methylguanine residues, releasing 2,6-diamino-4-hydroxy-5-(N-methyl)formamidopyrimidine.. The enzyme catalyses 2'-deoxyribonucleotide-(2'-deoxyribose 5'-phosphate)-2'-deoxyribonucleotide-DNA = a 3'-end 2'-deoxyribonucleotide-(2,3-dehydro-2,3-deoxyribose 5'-phosphate)-DNA + a 5'-end 5'-phospho-2'-deoxyribonucleoside-DNA + H(+). Its function is as follows. Involved in base excision repair of DNA damaged by oxidation or by mutagenic agents. Acts as a DNA glycosylase that recognizes and removes damaged bases. Can process efficiently 4,6-diamino-5-formamidopyrimidine (FapyA), 2,6-diamino-4- hydroxy-5-formamidopyrimidine (FapyG) and the further oxidation products of 8-oxoguanine (8-oxoG), such as guanidinohydantoin and spiroiminodihydantoin. Has marginal activity towards 8-oxoG. Has AP (apurinic/apyrimidinic) lyase activity. Cleaves the DNA backbone by beta-delta elimination to generate a single-strand break at the site of the removed base with both 3'- and 5'-phosphates. This chain is Formamidopyrimidine-DNA glycosylase (FPG1), found in Arabidopsis thaliana (Mouse-ear cress).